Consider the following 257-residue polypeptide: UPF0246 protein lpg1366 (257 aa).

The protein belongs to the UPF0246 family.

The protein is UPF0246 protein lpg1366 of Legionella pneumophila subsp. pneumophila (strain Philadelphia 1 / ATCC 33152 / DSM 7513).